Reading from the N-terminus, the 144-residue chain is Large ribosomal subunit protein uL15 (144 aa).

Residues 1-55 (MQLNELKPVAGSRFKRLRKGRGLSSGHGFTSGRGTKGQKAHGKTRLGFEGGQMPL) form a disordered region. Residues 23–35 (LSSGHGFTSGRGT) show a composition bias toward gly residues.

The protein belongs to the universal ribosomal protein uL15 family. Part of the 50S ribosomal subunit.

Functionally, binds to the 23S rRNA. The protein is Large ribosomal subunit protein uL15 of Limosilactobacillus fermentum (strain NBRC 3956 / LMG 18251) (Lactobacillus fermentum).